Here is a 506-residue protein sequence, read N- to C-terminus: Deoxyribodipyrimidine photo-lyase (506 aa).

The segment covering 1-21 (MPPTSVSPPRTAPGPANPSPA) has biased composition (pro residues). The disordered stretch occupies residues 1-33 (MPPTSVSPPRTAPGPANPSPAHPSRVRVIHPGG). A Photolyase/cryptochrome alpha/beta domain is found at 38–171 (GPVVYWMLRD…AVHQVDAHNV (134 aa)). Residues Tyr-268 and 282 to 285 (SGLS) contribute to the FAD site. At Ser-312 the chain carries Phosphoserine. Residues 319 to 327 (ELVVRRELA), Lys-390, Asn-421, Asp-427, and 427 to 429 (DGR) each bind FAD. The disordered stretch occupies residues 487–506 (KKRNAEESPNPVVKLSKSQH).

Belongs to the DNA photolyase class-2 family. FAD serves as cofactor. Expressed in proliferating tissues. Highly expressed in roots and shoot apical meristem (SAM). Expressed in leaves, flag leaves, and panicle.

It localises to the nucleus. It catalyses the reaction cyclobutadipyrimidine (in DNA) = 2 pyrimidine residues (in DNA).. In terms of biological role, involved in repair of UV radiation-induced DNA damage. Catalyzes the light-dependent monomerization (300-600 nm) of cyclobutylpyrimidine dimers (CPDs), which are formed between adjacent bases on the same DNA strand upon exposure to ultraviolet radiation. Required for plant survival in the presence of UV-B light. Not involved in the repair of (6-4) photoproducts. The polypeptide is Deoxyribodipyrimidine photo-lyase (PHR) (Oryza sativa subsp. japonica (Rice)).